Here is a 185-residue protein sequence, read N- to C-terminus: Ribosome-recycling factor (185 aa).

This sequence belongs to the RRF family.

The protein localises to the cytoplasm. Responsible for the release of ribosomes from messenger RNA at the termination of protein biosynthesis. May increase the efficiency of translation by recycling ribosomes from one round of translation to another. The chain is Ribosome-recycling factor from Streptococcus pyogenes serotype M18 (strain MGAS8232).